Consider the following 657-residue polypeptide: Forkhead box protein O3 (657 aa).

Disordered regions lie at residues 1–71 and 216–320; these read MAEA…EGAA and SSWW…ELDD. Residues 142-236 constitute a DNA-binding region (fork-head); it reads WGNMSYADLI…KGGKAPRRRA (95 aa). Positions 246-257 are enriched in basic residues; sequence TKSRGRAAKKKA. Polar residues predominate over residues 268-283; sequence DSPSQLSKWPGSPTSR. Residues 284–296 show a composition bias toward basic and acidic residues; that stretch reads SSDKLDTWTDFRS. The segment covering 297–307 has biased composition (polar residues); the sequence is RTNSNASTISG.

Dephosphorylation may promote translocation to the nucleus where the protein induces transcription of target genes and triggers apoptosis. As to expression, localized to the animal hemisphere during early cleavage stages. At the late neurula, localized in the anterior neural plate, neural crest cells and in the hatching gland. As development progresses, expression becomes less localized, being observed in a variety of organs and tissues including the head, branchial arches and somites by stage 32.

The protein resides in the cytoplasm. Its subcellular location is the cytosol. The protein localises to the nucleus. Transcriptional activator that recognizes and binds to the DNA sequence 5'-[AG]TAAA[TC]A-3' and regulates different processes, such as apoptosis and autophagy. Acts as a positive regulator of autophagy in skeletal muscle: in starved cells, enters the nucleus following dephosphorylation and binds the promoters of autophagy genes, thereby activating their expression, resulting in proteolysis of skeletal muscle proteins. Triggers apoptosis in the absence of survival factors, including neuronal cell death upon oxidative stress. In response to metabolic stress, translocates into the mitochondria where it promotes mtDNA transcription. Also acts as a key regulator of chondrogenic commitment of skeletal progenitor cells in response to lipid availability: when lipids levels are low, translocates to the nucleus and promotes expression of sox9, which induces chondrogenic commitment and suppresses fatty acid oxidation. Also acts as a key regulator of regulatory T-cells (Treg) differentiation. This chain is Forkhead box protein O3, found in Xenopus laevis (African clawed frog).